The following is a 106-amino-acid chain: 3-oxoacyl-[acyl-carrier-protein] reductase (106 aa).

The protein belongs to the short-chain dehydrogenases/reductases (SDR) family. In terms of assembly, homotetramer. In terms of tissue distribution, mesocarp.

It is found in the plastid. The protein resides in the chloroplast. The enzyme catalyses a (3R)-hydroxyacyl-[ACP] + NADP(+) = a 3-oxoacyl-[ACP] + NADPH + H(+). The protein operates within lipid metabolism; fatty acid biosynthesis. The chain is 3-oxoacyl-[acyl-carrier-protein] reductase from Persea americana (Avocado).